Consider the following 1325-residue polypeptide: MSPHISPSKDTPSQRLPIPLSLPTHLGLLAKAYGVPPASILQLAWGLVLRCYFTTSSSRWGTIDMAHEYKEKKNLPIRCEVLELDDTRSIGWILQNWNDPSVHRHLPAEEDTSNVPVSAGSIVILTEDAKDLEVLRDFELTAEWIICFSTSTEKPLLRLSWRPDVIHSELASHLAQLLERALDTTFLSPDIPLSQINLFSILDHQKLLQWNHQYPQSVNRLVHEMFEDMVAARPQATAVAAWDGEVTYQQLDRLSTRLAIKLQTIDLQPESIVALCFEKSVWAIVAMLGVLRAGGAFLHIDPKHPTARQQAMISTTAARIILCSEQTRDTVSRFDSESLSLVVDRKMFAQEPDHKQVALPSPNNLGPRNAAYIVCTSGSTGLPKAIVVEHVSLCTSVTAQAEAMAVGGESRILQYAAYTFDVSVGDVFTALTHGACVCIPSDWERTQDLVGAINRLDVNQACLTSTVASFLTPMNVPKLQKLTLGGEPASKQCIDLWSGKVALKNVYGPAECTVWCVIQKNASSEIPASNIGRGIGARTWIVHPENHNQLMPIGAVGELLIEGPLVARGYLNDAERTTAVFLERAPSWLATFGPLPPQTRFYKTGDLARFEQNGTLFFEGRKDTQVKLRGQRIELGEIEYQIQQACNPVPPLAVELIETKDLQAPLLGAFITWTGGLEISLDQSAVPNGLGPDLDARSHFNELVSRIQANIDRTLPPYMMPGLYIPVQKLPLSTSGKLDRKVLRQYCTQHTRSFLTASEAESSDVIADDATKDDVALHEIVNPGEITLAQLWAHALGRRMESINAKDNFLSLGGDSLAAMRLVNLAARDAQVTLTVANIFESPVLADQARLLRPLSKTKSLAPFELMTRGEASIEDIVGFAAQQCRLLPAQIEDVYPCTPLQEEMMRDSLSNDRTQMGQEVVQISEELDLVRYQVACASVYRRFPILRTRFIEHSGRLVQVVVREDLCWKQPTSLAEYKALDSRERPALGKPLTRWALTSDGTHFILSLHHAMFDGITLGQIQGAIYAVYQCIPLPPPSVSFATFLAHLDDQNAPLSQESQRFWQSYLCPSASLDASITPETQKIDRPRASCGTQRLVQFTSGEVSALQRHGLTEATLVRGAWACTLARHQQKPHASAFSDVIFGTMLTGRNFHLPGVDMLAAPSLTHVPIRIRIDEGDLNGHSARALLARVQADATAMIPYEHDGMNRIRSIEVQTRAVFNRIRTLLVIQPIPEGLTSVSTSPFPGSIVSGPRVEAKEMGHFHWYGLLVECTLLPTKGFFVRVSYDNKMFGTEQVESLLDDYSTTLHTLANGLMDTDIPASLHV.

The adenylation stretch occupies residues 248-644 (YQQLDRLSTR…LGEIEYQIQQ (397 aa)). Positions 779–856 (EIVNPGEITL…DQARLLRPLS (78 aa)) constitute a Carrier domain. O-(pantetheine 4'-phosphoryl)serine is present on Ser816. Residues 893–1310 (EDVYPCTPLQ…DDYSTTLHTL (418 aa)) form a condensation region.

It belongs to the NRP synthetase family. Requires pantetheine 4'-phosphate as cofactor.

It functions in the pathway antifungal biosynthesis. Functionally, nonribosomal peptide synthetase; part of the gene cluster that mediates the biosynthesis of the tetrahydropyranyl antifungal agent lanomycin that acts as an inhibitor of CYP51 and blocks the ergosterol biosynthesis. The biosynthesis probably begins with the formation of an hexaketide, followed by methionine mediated alkylation of C-2 and C-6, and methylation of the reduced C-3 oxygen, pyran forming reductive ring closure, oxygenation of C-4, beta-keto reduction, enoyl reduction and dehydration of the remaining oxygens, and finally, acylation with glycine to complete the biosynthesis. In Pyrenophora dematioidea (Helminthosporium dematioideum), this protein is Nonribosomal peptide synthetase.